Reading from the N-terminus, the 536-residue chain is Probable 1,4-beta-D-glucan cellobiohydrolase B (536 aa).

A signal peptide spans 1 to 21 (MSSFQVYRAALLLSILATANA). Residues 22 to 458 (QQVGTYTTET…SNIKFGPIGS (437 aa)) form a catalytic region. Catalysis depends on E233, which acts as the Nucleophile. E238 acts as the Proton donor in catalysis. N351 and N414 each carry an N-linked (GlcNAc...) asparagine glycan. The ser/Thr-rich linker stretch occupies residues 459–500 (TYSSGSSSGSGSSSSSSSTTTKATSTTLKTTSTTSSGSSSTS). Residues 464–499 (SSSGSGSSSSSSSTTTKATSTTLKTTSTTSSGSSST) are disordered. Residues 500-536 (SAAQAYGQCGGQGWTGPTTCVSGYTCTYENAYYSQCL) enclose the CBM1 domain. Intrachain disulfides connect C508/C525 and C519/C535.

Belongs to the glycosyl hydrolase 7 (cellulase C) family.

It localises to the secreted. The catalysed reaction is Hydrolysis of (1-&gt;4)-beta-D-glucosidic linkages in cellulose and cellotetraose, releasing cellobiose from the non-reducing ends of the chains.. In terms of biological role, the biological conversion of cellulose to glucose generally requires three types of hydrolytic enzymes: (1) Endoglucanases which cut internal beta-1,4-glucosidic bonds; (2) Exocellobiohydrolases that cut the disaccharide cellobiose from the non-reducing end of the cellulose polymer chain; (3) Beta-1,4-glucosidases which hydrolyze the cellobiose and other short cello-oligosaccharides to glucose. The protein is Probable 1,4-beta-D-glucan cellobiohydrolase B (cbhB) of Aspergillus niger (strain ATCC MYA-4892 / CBS 513.88 / FGSC A1513).